A 239-amino-acid chain; its full sequence is Norbelladine 4'-O-methyltransferase 2 (239 aa).

Residues valine 55, glutamate 77, 79–80, serine 85, aspartate 103, and alanine 132 contribute to the S-adenosyl-L-methionine site; that span reads GV. Aspartate 155 is an a divalent metal cation binding site. Aspartate 157 lines the S-adenosyl-L-methionine pocket. Positions 181 and 182 each coordinate a divalent metal cation.

It belongs to the class I-like SAM-binding methyltransferase superfamily. Cation-dependent O-methyltransferase family. Mg(2+) is required as a cofactor.

The enzyme catalyses norbelladine + S-adenosyl-L-methionine = 4'-O-methylnorbelladine + S-adenosyl-L-homocysteine + H(+). Its pathway is alkaloid biosynthesis. Its function is as follows. 4'-O-methyltransferase converting norbelladine to 4'-O-methylnorbelladine. 4'-O-methylnorbelladine is a precursor to all Amaryllidaceae alkaloids such as galanthamine, lycorine and haemanthamine, and including haemanthamine- and crinamine-type alkaloids, promising anticancer agents. This Narcissus aff. pseudonarcissus MK-2014 (Daffodil) protein is Norbelladine 4'-O-methyltransferase 2.